A 59-amino-acid chain; its full sequence is Cecropin-B1 (59 aa).

The signal sequence occupies residues M1–A23. The residue at position 57 (L57) is a Leucine amide.

The protein belongs to the cecropin family.

It localises to the secreted. In terms of biological role, cecropins have lytic and antibacterial activity against several Gram-positive and Gram-negative bacteria. This Culex pipiens pipiens (Northern house mosquito) protein is Cecropin-B1 (CECB1).